Consider the following 1349-residue polypeptide: Nitric oxide synthase (1349 aa).

Residues Ala-23–Arg-195 are disordered. Low complexity-rich tracts occupy residues Gln-24 to Gln-51 and Leu-64 to Asn-73. A compositionally biased stretch (gly residues) spans Ser-142–Ala-159. The span at Gly-165–Lys-189 shows a compositional bias: polar residues. Ser-250 contributes to the (6R)-L-erythro-5,6,7,8-tetrahydrobiopterin binding site. A heme b-binding site is contributed by Cys-328. Residues Gln-391, Trp-500, Tyr-501, Glu-505, and Asn-510 each contribute to the L-arginine site. (6R)-L-erythro-5,6,7,8-tetrahydrobiopterin-binding residues include Trp-591 and Phe-604. Tyr-619 provides a ligand contact to heme b. Positions Pro-641 to Phe-661 are calmodulin-binding. The region spanning Ala-671–Phe-868 is the Flavodoxin-like domain. FMN is bound at residue Val-814–Leu-845. Positions Ala-928–Pro-1167 constitute an FAD-binding FR-type domain. FAD-binding positions include Tyr-957 to Ala-968 and Leu-1100 to Ser-1110. Residues Ile-1175–Phe-1193 and Gly-1273–Val-1287 each bind NADP(+).

It belongs to the NOS family. Heme b serves as cofactor. The cofactor is FAD. Requires FMN as cofactor.

It catalyses the reaction 2 L-arginine + 3 NADPH + 4 O2 + H(+) = 2 L-citrulline + 2 nitric oxide + 3 NADP(+) + 4 H2O. With respect to regulation, stimulated by calcium/calmodulin. Functionally, catalyzes the conversion of L-arginine to L-citrulline producing nitric oxide (NO) which is a messenger molecule with diverse functions throughout the body. Truncated isoforms (isoform 3-isoform 6) are able to form intracellular complexes with the full-length protein and serve as dominant negative inhibitors of the enzyme activity. In Drosophila melanogaster (Fruit fly), this protein is Nitric oxide synthase (Nos).